A 716-amino-acid polypeptide reads, in one-letter code: Translation initiation factor IF-2 (716 aa).

The segment at 50–136 is disordered; the sequence is YKKGGARAKS…VKPKKELPEK (87 aa). Residues 62–84 show a composition bias toward polar residues; sequence PAETNKNKQPQGVNQQSAGNQPN. A compositionally biased stretch (basic residues) spans 101-113; the sequence is KNKKNNNNKKNKR. Positions 114–126 are enriched in low complexity; sequence NNNNNKNQHQQKP. In terms of domain architecture, tr-type G spans 217-386; the sequence is IRPPVVTIMG…LLVSEVEELK (170 aa). Residues 226–233 form a G1 region; that stretch reads GHVDHGKT. Position 226–233 (226–233) interacts with GTP; the sequence is GHVDHGKT. The tract at residues 251–255 is G2; sequence GITQH. The G3 stretch occupies residues 272–275; the sequence is DTPG. Residues 272 to 276 and 326 to 329 each bind GTP; these read DTPGH and NKID. The tract at residues 326–329 is G4; it reads NKID. A G5 region spans residues 362–364; the sequence is SAL.

It belongs to the TRAFAC class translation factor GTPase superfamily. Classic translation factor GTPase family. IF-2 subfamily.

It localises to the cytoplasm. One of the essential components for the initiation of protein synthesis. Protects formylmethionyl-tRNA from spontaneous hydrolysis and promotes its binding to the 30S ribosomal subunits. Also involved in the hydrolysis of GTP during the formation of the 70S ribosomal complex. The chain is Translation initiation factor IF-2 (infB) from Bacillus subtilis (strain 168).